The following is a 345-amino-acid chain: L-erythro-3,5-diaminohexanoate dehydrogenase (345 aa).

It belongs to the KDD family. In terms of assembly, homodimer.

It catalyses the reaction (3S,5S)-3,5-diaminohexanoate + NAD(+) + H2O = (5S)-5-amino-3-oxohexanoate + NH4(+) + NADH + H(+). The protein operates within amino-acid degradation; L-lysine degradation via acetate pathway. Its function is as follows. Involved in the anaerobic fermentation of lysine. Catalyzes the oxidative deamination of L-erythro-3,5-diaminohexanoate (3,5-DAH) to 3-keto-5-aminohexanoate (KAH). It can use NAD or NADP. In Fusobacterium nucleatum subsp. nucleatum (strain ATCC 25586 / DSM 15643 / BCRC 10681 / CIP 101130 / JCM 8532 / KCTC 2640 / LMG 13131 / VPI 4355), this protein is L-erythro-3,5-diaminohexanoate dehydrogenase.